The following is a 918-amino-acid chain: Isoleucine--tRNA ligase (918 aa).

A 'HIGH' region motif is present at residues 57-67; it reads PYANGHIHIGH. Position 564 (E564) interacts with L-isoleucyl-5'-AMP. A 'KMSKS' region motif is present at residues 605–609; the sequence is KMSKS. K608 is a binding site for ATP. Residues C888, C891, C903, and C906 each coordinate Zn(2+).

Belongs to the class-I aminoacyl-tRNA synthetase family. IleS type 1 subfamily. Monomer. Zn(2+) is required as a cofactor.

The protein localises to the cytoplasm. The enzyme catalyses tRNA(Ile) + L-isoleucine + ATP = L-isoleucyl-tRNA(Ile) + AMP + diphosphate. Its function is as follows. Catalyzes the attachment of isoleucine to tRNA(Ile). As IleRS can inadvertently accommodate and process structurally similar amino acids such as valine, to avoid such errors it has two additional distinct tRNA(Ile)-dependent editing activities. One activity is designated as 'pretransfer' editing and involves the hydrolysis of activated Val-AMP. The other activity is designated 'posttransfer' editing and involves deacylation of mischarged Val-tRNA(Ile). The chain is Isoleucine--tRNA ligase from Nitratiruptor sp. (strain SB155-2).